Reading from the N-terminus, the 312-residue chain is Ribosomal protein L11 methyltransferase (312 aa).

S-adenosyl-L-methionine contacts are provided by Thr-160, Gly-181, Asp-203, and Asn-246.

Belongs to the methyltransferase superfamily. PrmA family.

The protein resides in the cytoplasm. The catalysed reaction is L-lysyl-[protein] + 3 S-adenosyl-L-methionine = N(6),N(6),N(6)-trimethyl-L-lysyl-[protein] + 3 S-adenosyl-L-homocysteine + 3 H(+). Functionally, methylates ribosomal protein L11. The sequence is that of Ribosomal protein L11 methyltransferase from Staphylococcus carnosus (strain TM300).